The following is a 219-amino-acid chain: Probable GTP-binding protein EngB (219 aa).

In terms of domain architecture, EngB-type G spans 24-207; that stretch reads VQPEIAFAGR…HELIESWLRP (184 aa). Residues 32-39, 59-63, 81-84, 148-151, and 186-188 each bind GTP; these read GRSNAGKS, GRTQH, DLPG, TKCD, and FSA. The Mg(2+) site is built by serine 39 and threonine 61.

It belongs to the TRAFAC class TrmE-Era-EngA-EngB-Septin-like GTPase superfamily. EngB GTPase family. Mg(2+) is required as a cofactor.

Necessary for normal cell division and for the maintenance of normal septation. The sequence is that of Probable GTP-binding protein EngB from Burkholderia vietnamiensis (strain G4 / LMG 22486) (Burkholderia cepacia (strain R1808)).